Here is a 384-residue protein sequence, read N- to C-terminus: Outer membrane protein assembly factor BamC (384 aa).

An N-terminal signal peptide occupies residues 1–23 (MNKLNSVVVARGAVAVLLIGLAG). Cys-24 is lipidated: N-palmitoyl cysteine. The S-diacylglycerol cysteine moiety is linked to residue Cys-24. 2 disordered regions span residues 47-70 (LEVP…TSGK) and 251-273 (QAAQ…SGTL).

This sequence belongs to the BamC family. As to quaternary structure, part of the Bam complex.

The protein localises to the cell outer membrane. In terms of biological role, part of the outer membrane protein assembly complex, which is involved in assembly and insertion of beta-barrel proteins into the outer membrane. This Accumulibacter regalis protein is Outer membrane protein assembly factor BamC.